A 203-amino-acid chain; its full sequence is Ribosomal RNA large subunit methyltransferase E (203 aa).

Residues Gly60, Trp62, Asp79, Asp95, and Asp119 each contribute to the S-adenosyl-L-methionine site. The active-site Proton acceptor is Lys159.

It belongs to the class I-like SAM-binding methyltransferase superfamily. RNA methyltransferase RlmE family.

It is found in the cytoplasm. The enzyme catalyses uridine(2552) in 23S rRNA + S-adenosyl-L-methionine = 2'-O-methyluridine(2552) in 23S rRNA + S-adenosyl-L-homocysteine + H(+). Functionally, specifically methylates the uridine in position 2552 of 23S rRNA at the 2'-O position of the ribose in the fully assembled 50S ribosomal subunit. This Pelagibacter ubique (strain HTCC1062) protein is Ribosomal RNA large subunit methyltransferase E.